Reading from the N-terminus, the 180-residue chain is Oligoribonuclease (180 aa).

The Exonuclease domain maps to 7 to 170; that stretch reads LIWIDLEMTG…DDIRESIAEL (164 aa). Residue Tyr-128 is part of the active site.

Belongs to the oligoribonuclease family.

It localises to the cytoplasm. Its function is as follows. 3'-to-5' exoribonuclease specific for small oligoribonucleotides. In Pseudomonas entomophila (strain L48), this protein is Oligoribonuclease.